A 429-amino-acid chain; its full sequence is MSTTVRVVLDPPSNGEFYTLEDVIAGSVVLGLEKSVNIREVMVKLVGQSEAVVRPGDHLENEKPQSLQVPLSDNRSLHEVVKLESSVFPPENVKAAMKGSRKPFKVEKGEYKFPFEFHFPSRPQCIQRHQRKLFTYLKGRTNPKLPPSFNNLLSSKDVLNLNAYFYSLGCIEYFVEATVFTGGDEMWFKPFRSYPALKRTFEFIPSNVAQEHLEDALRENPNTPPQVFRSKFDVTFEGSEQQMWVEVRSKHLRSVYRLDYLFRPSGKKFNQVFLCMLNPLPESADLRVARVELNLIEVVTYLAGNRSNANLSSLRLAGVDTDYKVDLTKCQQTESGFTECHVELSDIYPLDMIRFNEEDYKHNGNRLYSFDSCNIRRRFKFQLFLHWTLNGVDHFQTEVLTNFTNIFCESVTVAEQPPDYMEEQLPKYE.

The protein belongs to the ART10 family.

The protein localises to the cytoplasm. In terms of biological role, may regulate endocytosis by recruiting RSP5 ubiquitin ligase activity to specific plasma membrane proteins in response to extracellular stimuli. The sequence is that of Arrestin-related trafficking adapter 10 (ART10) from Lachancea thermotolerans (strain ATCC 56472 / CBS 6340 / NRRL Y-8284) (Yeast).